A 348-amino-acid polypeptide reads, in one-letter code: MARHASSASESSGGVSSNSAAIAAASSCRGTTCSMAAHIPSRLSTFGGGISPVSVSTCSLVVSNTTWNAVANFADARSTRGRDFSFSFALSRSALASSFVAISTSSRSSASSTARDVRYTVVASSVARRRASECRRSSDALPSTPYRDSSASRRGGIRDTSTAPIPNAAISSARSSARFICGPDTRTGPRLSRSSSETRSPGGTVQPKSPAPLAARCSASRAGCPTAAGSLLPAPRPPASSASSPQAAAPAAPSATRLPRRTTPSAPRPSSRPARPPIPAARPPPRRTPGTPRPAAARARAPAGCSPARRTPSAPTDRRCRAARRGSPRPPAARPPGRQGTRRDSARL.

The segment at Ser132 to Leu348 is disordered. Low complexity predominate over residues Ser161–Arg178. The segment covering Ser192–Pro207 has biased composition (polar residues). Residues Ala227–Pro273 are compositionally biased toward low complexity. A compositionally biased stretch (pro residues) spans Ala274–Arg287. Over residues Thr288 to Arg310 the composition is skewed to low complexity.

This is an uncharacterized protein from Streptomyces fradiae (Streptomyces roseoflavus).